Reading from the N-terminus, the 262-residue chain is MQTRHRAKKSLGQNFLQDANIARKIVDSLKITENDSIIEIGPGQGALTKFILEAGPESLTLVEKDRDLAPALEAEYPEARVELEDALKFDWAGLDPDRNWKIVGNLPYNVASKIMWDIAAQCNATCVFMVQHEVAQRVTSGPGSKKYGAISVWIQSFCRTDYLFKVPPTVFKPKPKVDSAVIKFFPLPEEEKPSDIEGLAKLVKYCFQYRRKQLGKILKSFISDAVIQWAEKEGVSLTDRPEALSPLQFQSLYKSVKNDFPS.

S-adenosyl-L-methionine contacts are provided by asparagine 14, leucine 16, glycine 41, glutamate 63, aspartate 85, and asparagine 105.

It belongs to the class I-like SAM-binding methyltransferase superfamily. rRNA adenine N(6)-methyltransferase family. RsmA subfamily.

The protein localises to the cytoplasm. The enzyme catalyses adenosine(1518)/adenosine(1519) in 16S rRNA + 4 S-adenosyl-L-methionine = N(6)-dimethyladenosine(1518)/N(6)-dimethyladenosine(1519) in 16S rRNA + 4 S-adenosyl-L-homocysteine + 4 H(+). In terms of biological role, specifically dimethylates two adjacent adenosines (A1518 and A1519) in the loop of a conserved hairpin near the 3'-end of 16S rRNA in the 30S particle. May play a critical role in biogenesis of 30S subunits. This Maridesulfovibrio salexigens (strain ATCC 14822 / DSM 2638 / NCIMB 8403 / VKM B-1763) (Desulfovibrio salexigens) protein is Ribosomal RNA small subunit methyltransferase A.